A 910-amino-acid polypeptide reads, in one-letter code: ZZ-type zinc finger-containing protein 3 (910 aa).

2 disordered regions span residues 41–117 (AHPE…RQAE) and 133–153 (EATNSSEEDSPVKPDKEPGEH). The span at 67–84 (QKGTNNGRTSDVRQQSAR) shows a compositional bias: polar residues. Phosphoserine is present on residues serine 89, serine 96, serine 137, serine 138, and serine 142. Over residues 96–116 (SSSEKDDLERQALESCERRQA) the composition is skewed to basic and acidic residues. A compositionally biased stretch (basic and acidic residues) spans 142-153 (SPVKPDKEPGEH). A Glycyl lysine isopeptide (Lys-Gly) (interchain with G-Cter in SUMO2) cross-link involves residue lysine 283. Disordered stretches follow at residues 303–358 (TAES…VSGE), 373–444 (TSLS…PQDG), and 609–641 (ARPKSPLDPKKDGESLSYSMLPLSDGPEGSHNR). Composition is skewed to polar residues over residues 331–347 (SSASKEQCNENSSNPLD) and 397–434 (SSPTKTTSPYRENGQLEETNLSPQETNTTVSDHVSESP). Lysine 401 is subject to N6-acetyllysine. A Phosphoserine modification is found at serine 613. Residues 613–622 (SPLDPKKDGE) show a composition bias toward basic and acidic residues. Residue lysine 654 forms a Glycyl lysine isopeptide (Lys-Gly) (interchain with G-Cter in SUMO2) linkage. The HTH myb-type domain occupies 654-714 (KPETFNQLWT…RVQKYFIKLT (61 aa)). A DNA-binding region (H-T-H motif) is located at residues 687–710 (WQKIADELGNRTAKQVASRVQKYF). The residue at position 708 (lysine 708) is an N6-acetyllysine. Lysine 715 is covalently cross-linked (Glycyl lysine isopeptide (Lys-Gly) (interchain with G-Cter in SUMO2)). Residues 825-884 (HVGFKCDNCGVEPIQGVRWHCQDCPPEMSLDFCDSCSDCPHETDIHKEDHQLEPVYKSET) form a ZZ-type zinc finger. Cysteine 830, cysteine 833, cysteine 845, cysteine 848, cysteine 857, cysteine 860, histidine 870, and histidine 874 together coordinate Zn(2+).

In terms of assembly, component of the ADA2A-containing complex (ATAC), composed of KAT14, KAT2A, TADA2L, TADA3L, ZZ3, MBIP, WDR5, YEATS2, CCDC101 and DR1. Interacts via (ZZ-type zinc finger) with histone H3 in a methylation-independent manner and acetylation on 'Lys-4' (H3K4ac) moderately enhances the interaction.

The protein localises to the nucleus. Functionally, histone H3 reader that is required for the ATAC complex-mediated maintenance of histone acetylation and gene activation. Component of the ATAC complex, a complex with histone acetyltransferase activity on histones H3 and H4. The chain is ZZ-type zinc finger-containing protein 3 (Zzz3) from Mus musculus (Mouse).